The following is a 512-amino-acid chain: Cytochrome P450 monooxygenase hkm5 (512 aa).

The chain crosses the membrane as a helical span at residues 18 to 38; it reads LIQLVRALLWVLVITIGGAIV. Residues asparagine 184, asparagine 263, asparagine 275, asparagine 374, and asparagine 419 are each glycosylated (N-linked (GlcNAc...) asparagine). Cysteine 456 lines the heme pocket.

This sequence belongs to the cytochrome P450 family. Requires heme as cofactor.

The protein resides in the membrane. The enzyme catalyses hancockiamide A + reduced [NADPH--hemoprotein reductase] + O2 = hancockiamide G + oxidized [NADPH--hemoprotein reductase] + 2 H2O + H(+). It carries out the reaction hancockiamide B + reduced [NADPH--hemoprotein reductase] + O2 = hancockiamide C + oxidized [NADPH--hemoprotein reductase] + 2 H2O + H(+). The catalysed reaction is hancockiamide D + reduced [NADPH--hemoprotein reductase] + O2 = hancockiamide H + oxidized [NADPH--hemoprotein reductase] + 2 H2O + H(+). It participates in secondary metabolite biosynthesis. Functionally, cytochrome P450 monooxygenase; part of the gene cluster that mediates the biosynthesis of hancockiamides, an unusual new family of N-cinnamoylated piperazines. The NRPS hkm10 and the NmrA-like reductase hkm9 are proposed to convert two molecules of L-Phe to the intermediary piperazine called xenocockiamide A. Xenocockiamide A is then converted to hancockiamide D via a series of hydroxylations and O-methylations. The tyrosinase hkm6 may catalyze an aromatic hydroxylation, then the 2-oxoglutarate-dependent Fe(II) dioxygenase hkm4 and the FAD-dependent phenol hydroxylase hkm7 may catalyze consecutive hydroxylations to install 2 more hydroxy groups, and the methyltransferase hkm8 probably catalyzes two methylations using 2 molecules of S-adenosyl-L-methionine (SAM). The NRPS hkm11 activates and transfers trans-cinnamate supplied by the PAL hkm12 to hancockiamide D and produces hancockiamide A. NRPS Hkm11 has the flexibility to tolerate the bulky hancockiamide G as a substrate and the absence of the acetyl-transferase hkm3 opens up the opportunity for hkm11 to introduce a second N-cinnamoyl moiety. The cytochrome P450 monooxygenase hkm5 catalyzes the methylenedioxy bridge formation, converting hancockiamide A into hancockiamide G. Hkm5 can also convert hancockiamide B into hancockiamide C, and hancockiamide D into hancockiamide H. The N-acetyltransferase hkm3 finally transfers an acetyl group to 1-N of piperazine, converting hancockiamide A into hancockiamide B and hancockiamide G into hancockiamide C. This chain is Cytochrome P450 monooxygenase hkm5, found in Aspergillus hancockii.